A 387-amino-acid chain; its full sequence is Phosphoglycerate kinase (387 aa).

Substrate contacts are provided by residues 21 to 23 (DLN), R36, 59 to 62 (HLGR), R113, and R146. ATP contacts are provided by residues K197, E314, and 340–343 (GGDT).

Belongs to the phosphoglycerate kinase family. As to quaternary structure, monomer.

The protein resides in the cytoplasm. The catalysed reaction is (2R)-3-phosphoglycerate + ATP = (2R)-3-phospho-glyceroyl phosphate + ADP. Its pathway is carbohydrate degradation; glycolysis; pyruvate from D-glyceraldehyde 3-phosphate: step 2/5. In Pseudomonas putida (strain GB-1), this protein is Phosphoglycerate kinase.